The sequence spans 367 residues: AdoMet-dependent heme synthase (367 aa).

The Radical SAM core domain maps to 15–238 (DGSPTCKLIA…TSMHLKATCA (224 aa)). [4Fe-4S] cluster is bound by residues C31, C35, and C38.

This sequence belongs to the radical SAM superfamily. The cofactor is [4Fe-4S] cluster.

It carries out the reaction Fe-coproporphyrin III + 2 S-adenosyl-L-methionine = heme b + 2 5'-deoxyadenosine + 2 L-methionine + 2 CO2. It participates in porphyrin-containing compound metabolism; protoheme biosynthesis. In terms of biological role, involved in siroheme-dependent heme b biosynthesis. Catalyzes the conversion of Fe-coproporphyrin III into heme by the oxidative decarboxylation of two propionate side chains. The sequence is that of AdoMet-dependent heme synthase from Nitratidesulfovibrio vulgaris (strain ATCC 29579 / DSM 644 / CCUG 34227 / NCIMB 8303 / VKM B-1760 / Hildenborough) (Desulfovibrio vulgaris).